A 231-amino-acid polypeptide reads, in one-letter code: Heptaprenylglyceryl phosphate synthase (231 aa).

Residue Lys-12 coordinates sn-glycerol 1-phosphate. 2 residues coordinate Mg(2+): Asp-14 and Thr-40. Residues Tyr-159–Gly-164, Gly-189, and Gly-209–Asn-210 each bind sn-glycerol 1-phosphate.

It belongs to the GGGP/HepGP synthase family. Group I subfamily. Homodimer. It depends on Mg(2+) as a cofactor.

It carries out the reaction sn-glycerol 1-phosphate + all-trans-heptaprenyl diphosphate = 3-heptaprenyl-sn-glycero-1-phosphate + diphosphate. It functions in the pathway membrane lipid metabolism; glycerophospholipid metabolism. In terms of biological role, prenyltransferase that catalyzes in vivo the transfer of the heptaprenyl moiety of heptaprenyl pyrophosphate (HepPP; 35 carbon atoms) to the C3 hydroxyl of sn-glycerol-1-phosphate (G1P), producing heptaprenylglyceryl phosphate (HepGP). This reaction is an ether-bond-formation step in the biosynthesis of archaea-type G1P-based membrane lipids found in Bacillales. In Anoxybacillus flavithermus (strain DSM 21510 / WK1), this protein is Heptaprenylglyceryl phosphate synthase.